Here is a 568-residue protein sequence, read N- to C-terminus: Protein KATNIP homolog (568 aa).

A compositionally biased stretch (basic and acidic residues) spans 1–20 (MSDSDLKEIEKNAENIKLEP). Positions 1–30 (MSDSDLKEIEKNAENIKLEPAEDEVNEEDQ) are disordered. Acidic residues predominate over residues 21–30 (AEDEVNEEDQ).

As to expression, expressed in most ciliated neuronal cells. Not expressed in non-ciliated cells.

The protein localises to the cytoplasm. It is found in the cytoskeleton. Its subcellular location is the cilium axoneme. The protein resides in the cilium basal body. Its function is as follows. May regulate ciliary A-tubule number and, along with arl-13, controls cilium integrity. The polypeptide is Protein KATNIP homolog (Caenorhabditis elegans).